The chain runs to 592 residues: 2-succinyl-5-enolpyruvyl-6-hydroxy-3-cyclohexene-1-carboxylate synthase (592 aa).

Belongs to the TPP enzyme family. MenD subfamily. As to quaternary structure, homodimer. Requires Mg(2+) as cofactor. The cofactor is Mn(2+). It depends on thiamine diphosphate as a cofactor.

The catalysed reaction is isochorismate + 2-oxoglutarate + H(+) = 5-enolpyruvoyl-6-hydroxy-2-succinyl-cyclohex-3-ene-1-carboxylate + CO2. It participates in quinol/quinone metabolism; 1,4-dihydroxy-2-naphthoate biosynthesis; 1,4-dihydroxy-2-naphthoate from chorismate: step 2/7. The protein operates within quinol/quinone metabolism; menaquinone biosynthesis. Functionally, catalyzes the thiamine diphosphate-dependent decarboxylation of 2-oxoglutarate and the subsequent addition of the resulting succinic semialdehyde-thiamine pyrophosphate anion to isochorismate to yield 2-succinyl-5-enolpyruvyl-6-hydroxy-3-cyclohexene-1-carboxylate (SEPHCHC). The sequence is that of 2-succinyl-5-enolpyruvyl-6-hydroxy-3-cyclohexene-1-carboxylate synthase from Haloarcula marismortui (strain ATCC 43049 / DSM 3752 / JCM 8966 / VKM B-1809) (Halobacterium marismortui).